The primary structure comprises 2255 residues: Defense against restriction protein B (2255 aa).

In terms of domain architecture, Helicase ATP-binding spans 841-1126 (VRRLSEDGRG…YNMLSHVLPK (286 aa)). 854–861 (FGTGLGKT) provides a ligand contact to ATP. Positions 1052 to 1055 (DEGH) match the DEAH box motif. Positions 1198-1234 (ELDEHQQDAPLTEEQLAAYEELRQQAEAAAKANNGVT) form a coiled coil. A Helicase C-terminal domain is found at 1383-1568 (KLKRIICNAL…EMENADANDM (186 aa)). The stretch at 1617–1654 (HAAGEDVEVLTAELERSKAELEKTTAEVAKFKQAVMAK) forms a coiled coil.

It belongs to the helicase family.

It localises to the virion. In terms of biological role, capsid internal protein that is probably ejected along with the viral DNA and prevents degradation of viral DNA by the host EcoB and EcoK restriction-modification antiviral defense systems. The sequence is that of Defense against restriction protein B from Escherichia phage P1 (Bacteriophage P1).